Consider the following 194-residue polypeptide: Yellow fluorescent protein (194 aa).

2 Lumazine-binding repeats span residues 1 to 98 (MFKG…SGGH) and 99 to 194 (ILSA…NQCW). 179-183 (KVNVE) contributes to the FMN binding site.

As to quaternary structure, homodimer. The cofactor is FMN.

In terms of biological role, antenna protein that modulates the color of the bioluminescence emission of the luciferase. In the presence of YFP and only at temperatures below 20 degrees Celsius, luciferase exhibits a bimodal emission spectrum with a new peak at 545 nM (yellow), in addition to the one at 485 nM. The sequence is that of Yellow fluorescent protein (luxY) from Aliivibrio fischeri (Vibrio fischeri).